A 401-amino-acid chain; its full sequence is Bifunctional D-cysteine desulfhydrase/1-aminocyclopropane-1-carboxylate deaminase, mitochondrial (401 aa).

The transit peptide at 1 to 37 directs the protein to the mitochondrion; sequence MRGRSLTLSRVKLELARRSMSATSVPSMADFLTKKPY. Position 2 is an N-acetylserine (Arg-2). N6-(pyridoxal phosphate)lysine is present on Lys-93. The Nucleophile role is filled by Ser-120.

Belongs to the ACC deaminase/D-cysteine desulfhydrase family. The cofactor is pyridoxal 5'-phosphate. Highly expressed in stems and cauline leaves, and at lower levels in roots, rosette leaves and flowers.

The protein localises to the mitochondrion. The catalysed reaction is D-cysteine + H2O = hydrogen sulfide + pyruvate + NH4(+) + H(+). The enzyme catalyses 1-aminocyclopropane-1-carboxylate + H2O = 2-oxobutanoate + NH4(+). Catalyzes the production of hydrogen sulfide (H2S) from cysteine. Is mainly responsible for the degradation of cysteine to generate H2S, a regulator of stomatal movement and closure. Has high affinity for D-cysteine. Its function is as follows. Possesses 1-aminocyclopropane-1-carboxylic acid (ACC) deaminase activity. Acts as a regulator of ACC levels and causes changes in ethylene levels. The sequence is that of Bifunctional D-cysteine desulfhydrase/1-aminocyclopropane-1-carboxylate deaminase, mitochondrial (DCD) from Arabidopsis thaliana (Mouse-ear cress).